The following is a 140-amino-acid chain: MAIERTFSMIKPDATKRNLTGAITKVFEDNGLRIVASKRVWMSKREAEGFYAVHKERPFFGELVEGMTSGPTIVQVLEGENAILKNREIMGATNPAQAAEGTIRKSFALSIGENSVHGSDAPETAAQEIAYWFAETEIVG.

Residues lysine 11, phenylalanine 59, arginine 87, threonine 93, arginine 104, and asparagine 114 each contribute to the ATP site. Residue histidine 117 is the Pros-phosphohistidine intermediate of the active site.

The protein belongs to the NDK family. Homotetramer. It depends on Mg(2+) as a cofactor.

It localises to the cytoplasm. It catalyses the reaction a 2'-deoxyribonucleoside 5'-diphosphate + ATP = a 2'-deoxyribonucleoside 5'-triphosphate + ADP. The catalysed reaction is a ribonucleoside 5'-diphosphate + ATP = a ribonucleoside 5'-triphosphate + ADP. In terms of biological role, major role in the synthesis of nucleoside triphosphates other than ATP. The ATP gamma phosphate is transferred to the NDP beta phosphate via a ping-pong mechanism, using a phosphorylated active-site intermediate. This is Nucleoside diphosphate kinase from Agrobacterium fabrum (strain C58 / ATCC 33970) (Agrobacterium tumefaciens (strain C58)).